We begin with the raw amino-acid sequence, 214 residues long: UPF0502 protein Pput_3252 (214 aa).

Belongs to the UPF0502 family.

The sequence is that of UPF0502 protein Pput_3252 from Pseudomonas putida (strain ATCC 700007 / DSM 6899 / JCM 31910 / BCRC 17059 / LMG 24140 / F1).